Consider the following 534-residue polypeptide: Cytokine-like nuclear factor N-PAC (534 aa).

The region spanning 8 to 66 (QGDLVWGKLGRYPPWPGKIVNPPKDLKKPRGKKCLFVKFFGTEDHAWIKVEQLKPYHAH) is the PWWP domain. 2 stretches are compositionally biased toward basic and acidic residues: residues 93-122 (AKAK…QTGE) and 138-157 (RSRD…DKDS). Residues 93–168 (AKAKEHAKEH…SPQPSSLKKL (76 aa)) are disordered. The a.T hook DNA-binding region spans 144-156 (PRKRGRPPKDDKD). Positions 190–193 (DSWL) are interaction with histone H3. A dehydrogenase domain region spans residues 242–534 (GNIIPTDKKI…MSAVYRAYIH (293 aa)). NAD(+) is bound by residues 252-266 (GFLG…IVSN), Thr-343, and Lys-486.

The protein belongs to the HIBADH-related family. NP60 subfamily. Homotetramere. Binds to mononucleosomes.

The protein localises to the nucleus. It localises to the chromosome. Its function is as follows. Cytokine-like nuclear factor with chromatin gene reader activity involved in chromatin modification and regulation of gene expression. Acts as a nucleosome-destabilizing factor that is recruited to genes during transcriptional activation. Recognizes and binds histone H3 without a preference for specific epigenetic markers and also binds DNA. Interacts with KDM1B and promotes its histone demethylase activity by facilitating the capture of H3 tails, they form a multifunctional enzyme complex that modifies transcribed chromatin and facilitates Pol II transcription through nucleosomes. The polypeptide is Cytokine-like nuclear factor N-PAC (glyr1) (Xenopus tropicalis (Western clawed frog)).